The following is a 692-amino-acid chain: Penicillin-binding protein activator LpoA (692 aa).

Residues 1-26 (MLSSITVRTKSGRLIPLVLAATLLAA) form the signal peptide. Cys27 carries the N-palmitoyl cysteine lipid modification. The S-diacylglycerol cysteine moiety is linked to residue Cys27. 2 disordered regions span residues 297–316 (AAAA…AAAT) and 324–373 (VNAA…PDAH). The segment covering 332–363 (PSAQGTDAAAPAAPNDSAALPPLDAAGDPIAP) has biased composition (low complexity).

It belongs to the LpoA family. In terms of assembly, interacts with PBP1a.

The protein resides in the cell outer membrane. Its function is as follows. Regulator of peptidoglycan synthesis that is essential for the function of penicillin-binding protein 1A (PBP1a). The sequence is that of Penicillin-binding protein activator LpoA from Edwardsiella piscicida.